A 310-amino-acid polypeptide reads, in one-letter code: Probable GTP 3',8-cyclase (310 aa).

The 228-residue stretch at 5 to 232 (RFGRPVTNLR…RRRKYFIPID (228 aa)) folds into the Radical SAM core domain. Arg-14 lines the GTP pocket. [4Fe-4S] cluster contacts are provided by Cys-21 and Cys-25. Tyr-27 contributes to the S-adenosyl-L-methionine binding site. Cys-28 is a binding site for [4Fe-4S] cluster. Lys-61 provides a ligand contact to GTP. Gly-65 provides a ligand contact to S-adenosyl-L-methionine. Thr-90 contributes to the GTP binding site. Ser-114 lines the S-adenosyl-L-methionine pocket. Position 150 (Lys-150) interacts with GTP. Residue Met-189 coordinates S-adenosyl-L-methionine. Residues Cys-250 and Cys-253 each contribute to the [4Fe-4S] cluster site. 255–257 (RLR) serves as a coordination point for GTP. Cys-267 is a binding site for [4Fe-4S] cluster.

It belongs to the radical SAM superfamily. MoaA family. [4Fe-4S] cluster is required as a cofactor.

The enzyme catalyses GTP + AH2 + S-adenosyl-L-methionine = (8S)-3',8-cyclo-7,8-dihydroguanosine 5'-triphosphate + 5'-deoxyadenosine + L-methionine + A + H(+). Its pathway is cofactor biosynthesis; molybdopterin biosynthesis. Functionally, catalyzes the cyclization of GTP to (8S)-3',8-cyclo-7,8-dihydroguanosine 5'-triphosphate. This chain is Probable GTP 3',8-cyclase, found in Pyrococcus horikoshii (strain ATCC 700860 / DSM 12428 / JCM 9974 / NBRC 100139 / OT-3).